The primary structure comprises 62 residues: Large ribosomal subunit protein bL28 (62 aa).

Residues 1-23 (MARRCFVTGKSAKAGNARSHSMR) are disordered.

Belongs to the bacterial ribosomal protein bL28 family.

This is Large ribosomal subunit protein bL28 from Brevibacillus brevis (strain 47 / JCM 6285 / NBRC 100599).